Reading from the N-terminus, the 85-residue chain is Large ribosomal subunit protein bL27 (85 aa).

The segment at 1 to 21 is disordered; it reads MAHKKAGGSSRNGRDSEGRRL.

This sequence belongs to the bacterial ribosomal protein bL27 family.

This chain is Large ribosomal subunit protein bL27, found in Rhodospirillum rubrum (strain ATCC 11170 / ATH 1.1.1 / DSM 467 / LMG 4362 / NCIMB 8255 / S1).